The primary structure comprises 291 residues: Gamma-sarcoglycan (291 aa).

Residues 38-58 (LFVLLLLIVLLVNFALTIWIL) form a helical; Signal-anchor for type II membrane protein membrane-spanning segment. Residues 59-291 (RVMWFSPVGM…TCHEHSHLCL (233 aa)) are Extracellular-facing. Asparagine 110 is a glycosylation site (N-linked (GlcNAc...) asparagine). Cystine bridges form between cysteine 265–cysteine 290 and cysteine 267–cysteine 283.

Belongs to the sarcoglycan beta/delta/gamma/zeta family. As to quaternary structure, interacts with the syntrophin SNTA1. Cross-link to form 2 major subcomplexes: one consisting of SGCB, SGCD and SGCG and the other consisting of SGCB and SGCD. The association between SGCB and SGCG is particularly strong while SGCA is loosely associated with the other sarcoglycans. Interacts with FLNC. In terms of processing, disulfide bonds are present.

It localises to the cell membrane. The protein resides in the sarcolemma. It is found in the cytoplasm. The protein localises to the cytoskeleton. In terms of biological role, component of the sarcoglycan complex, a subcomplex of the dystrophin-glycoprotein complex which forms a link between the F-actin cytoskeleton and the extracellular matrix. The chain is Gamma-sarcoglycan (SGCG) from Bos taurus (Bovine).